Reading from the N-terminus, the 443-residue chain is Chromosomal replication initiator protein DnaA (443 aa).

The domain I, interacts with DnaA modulators stretch occupies residues Met-1 to Phe-67. Residues Phe-67–Gly-105 are domain II. Positions Asn-106–Ala-323 are domain III, AAA+ region. ATP is bound by residues Gly-151, Gly-153, Lys-154, and Thr-155. Residues Asn-324–Glu-443 are domain IV, binds dsDNA.

This sequence belongs to the DnaA family. Oligomerizes as a right-handed, spiral filament on DNA at oriC.

It localises to the cytoplasm. In terms of biological role, plays an essential role in the initiation and regulation of chromosomal replication. ATP-DnaA binds to the origin of replication (oriC) to initiate formation of the DNA replication initiation complex once per cell cycle. Binds the DnaA box (a 9 base pair repeat at the origin) and separates the double-stranded (ds)DNA. Forms a right-handed helical filament on oriC DNA; dsDNA binds to the exterior of the filament while single-stranded (ss)DNA is stabiized in the filament's interior. The ATP-DnaA-oriC complex binds and stabilizes one strand of the AT-rich DNA unwinding element (DUE), permitting loading of DNA polymerase. After initiation quickly degrades to an ADP-DnaA complex that is not apt for DNA replication. Binds acidic phospholipids. This chain is Chromosomal replication initiator protein DnaA, found in Stenotrophomonas maltophilia (strain R551-3).